The following is a 426-amino-acid chain: Glutamate-1-semialdehyde 2,1-aminomutase (426 aa).

N6-(pyridoxal phosphate)lysine is present on Lys265.

Belongs to the class-III pyridoxal-phosphate-dependent aminotransferase family. HemL subfamily. As to quaternary structure, homodimer. Pyridoxal 5'-phosphate is required as a cofactor.

The protein resides in the cytoplasm. The enzyme catalyses (S)-4-amino-5-oxopentanoate = 5-aminolevulinate. The protein operates within porphyrin-containing compound metabolism; protoporphyrin-IX biosynthesis; 5-aminolevulinate from L-glutamyl-tRNA(Glu): step 2/2. In Escherichia coli O81 (strain ED1a), this protein is Glutamate-1-semialdehyde 2,1-aminomutase.